Here is a 555-residue protein sequence, read N- to C-terminus: Glucose-6-phosphate isomerase (555 aa).

The Proton donor role is filled by E365. Active-site residues include H396 and K522.

The protein belongs to the GPI family.

The protein localises to the cytoplasm. The catalysed reaction is alpha-D-glucose 6-phosphate = beta-D-fructose 6-phosphate. It functions in the pathway carbohydrate biosynthesis; gluconeogenesis. It participates in carbohydrate degradation; glycolysis; D-glyceraldehyde 3-phosphate and glycerone phosphate from D-glucose: step 2/4. In terms of biological role, catalyzes the reversible isomerization of glucose-6-phosphate to fructose-6-phosphate. In Psychrobacter cryohalolentis (strain ATCC BAA-1226 / DSM 17306 / VKM B-2378 / K5), this protein is Glucose-6-phosphate isomerase.